The chain runs to 56 residues: Repressor-like protein SSo7c4 (56 aa).

The SpoVT-AbrB domain occupies 4 to 51 (EEIVKVSRNYQVTIPAKVRQKFQIKEGDLVKVTFDESGGVVKIQLLDS).

The polypeptide is Repressor-like protein SSo7c4 (Saccharolobus solfataricus (strain ATCC 35092 / DSM 1617 / JCM 11322 / P2) (Sulfolobus solfataricus)).